The sequence spans 641 residues: Raffinose carrier protein (641 aa).

The permease stretch occupies residues 1-506 (MQEEHNYKWV…GQVIPLAQVN (506 aa)). 12 helical membrane passes run 25–45 (AFYS…LFDT), 57–77 (LVTL…PFIG), 93–113 (WVVV…TNLG), 120–140 (AMIY…FYSF), 168–188 (LGST…VIFF), 201–221 (WFIF…GVGL), 253–273 (LLWA…LGSL), 288–308 (FSIL…LFPV), 317–337 (GVFA…TIAG), 342–362 (LVLL…LVVL), 394–414 (FGGA…GMTT), and 429–449 (FKLT…GIFS). Positions 507–611 (DPTFAAGTLG…DDTVIMTVTN (105 aa)) constitute a PTS EIIA type-1 domain. His-559 carries the post-translational modification Phosphohistidine; by HPr.

The protein in the N-terminal section; belongs to the sodium:galactoside symporter (TC 2.A.2) family.

It is found in the cell membrane. The protein is Raffinose carrier protein (rafP) of Pediococcus pentosaceus.